Consider the following 156-residue polypeptide: Cyanate hydratase (156 aa).

Active-site residues include Arg96, Glu99, and Ser122.

The protein belongs to the cyanase family.

It carries out the reaction cyanate + hydrogencarbonate + 3 H(+) = NH4(+) + 2 CO2. Functionally, catalyzes the reaction of cyanate with bicarbonate to produce ammonia and carbon dioxide. The sequence is that of Cyanate hydratase from Photorhabdus laumondii subsp. laumondii (strain DSM 15139 / CIP 105565 / TT01) (Photorhabdus luminescens subsp. laumondii).